Consider the following 418-residue polypeptide: Homoaconitase large subunit (418 aa).

Residues cysteine 292, cysteine 352, and cysteine 355 each contribute to the [4Fe-4S] cluster site.

Belongs to the aconitase/IPM isomerase family. In terms of assembly, heterodimer of HacA and HacB. Requires [4Fe-4S] cluster as cofactor.

It catalyses the reaction (2R,3S)-homoisocitrate = cis-homoaconitate + H2O. It participates in amino-acid biosynthesis; L-lysine biosynthesis via AAA pathway; L-alpha-aminoadipate from 2-oxoglutarate: step 3/5. Is not inhibited by lysine. In terms of biological role, catalyzes the reversible hydration of cis-homoaconitate ((Z)-but-1-ene-1,2,4-tricarboxylate) to homoisocitrate ((1R,2S)-1-hydroxybutane-1,2,4-tricarboxylate). Can catalyze neither the dehydration of (R)-homocitrate ((2R)-2-hydroxybutane-1,2,4-tricarboxylate) into cis-homoaconitate in vitro, nor the reverse reaction. Is not active toward (S)-homocitrate, cis-aconitate or citrate as substrate. The protein is Homoaconitase large subunit (hacA) of Thermus thermophilus (strain ATCC BAA-163 / DSM 7039 / HB27).